The sequence spans 70 residues: V-type proton ATPase subunit e1 (70 aa).

Helical transmembrane passes span 1–21 (MGFLITTLIFVVVGIIASLCV) and 36–56 (LTLVITATVCCWMMWAIVYIA).

Belongs to the V-ATPase e1/e2 subunit family. In terms of assembly, V-ATPase is a heteromultimeric enzyme composed of a peripheral catalytic V1 complex (components A to H) attached to an integral membrane V0 proton pore complex (components: a, c, c'', d and e).

The protein localises to the golgi apparatus. Its subcellular location is the trans-Golgi network membrane. Subunit of the integral membrane V0 complex of vacuolar ATPase. V-ATPase is responsible for acidifying a variety of intracellular compartments in eukaryotic cells. This Arabidopsis thaliana (Mouse-ear cress) protein is V-type proton ATPase subunit e1 (VHA-e1).